We begin with the raw amino-acid sequence, 322 residues long: tRNA uridine(34) hydroxylase (322 aa).

The 95-residue stretch at Gln-125 to Gln-219 folds into the Rhodanese domain. Cys-179 acts as the Cysteine persulfide intermediate in catalysis.

Belongs to the TrhO family.

It catalyses the reaction uridine(34) in tRNA + AH2 + O2 = 5-hydroxyuridine(34) in tRNA + A + H2O. In terms of biological role, catalyzes oxygen-dependent 5-hydroxyuridine (ho5U) modification at position 34 in tRNAs. This chain is tRNA uridine(34) hydroxylase, found in Bacillus velezensis (strain DSM 23117 / BGSC 10A6 / LMG 26770 / FZB42) (Bacillus amyloliquefaciens subsp. plantarum).